We begin with the raw amino-acid sequence, 299 residues long: 4-diphosphocytidyl-2-C-methyl-D-erythritol kinase (299 aa).

Lysine 33 is an active-site residue. 115–125 (PLASGLGGGSS) is an ATP binding site. Aspartate 154 is a catalytic residue.

This sequence belongs to the GHMP kinase family. IspE subfamily.

It carries out the reaction 4-CDP-2-C-methyl-D-erythritol + ATP = 4-CDP-2-C-methyl-D-erythritol 2-phosphate + ADP + H(+). Its pathway is isoprenoid biosynthesis; isopentenyl diphosphate biosynthesis via DXP pathway; isopentenyl diphosphate from 1-deoxy-D-xylulose 5-phosphate: step 3/6. In terms of biological role, catalyzes the phosphorylation of the position 2 hydroxy group of 4-diphosphocytidyl-2C-methyl-D-erythritol. This Deinococcus geothermalis (strain DSM 11300 / CIP 105573 / AG-3a) protein is 4-diphosphocytidyl-2-C-methyl-D-erythritol kinase.